The sequence spans 837 residues: Zinc fingers and homeoboxes protein 2 (837 aa).

The tract at residues 1–41 (MASKRKSTTPCMVRTSQVVEQDVPEEVDRAKEKGIGTPQPD) is disordered. Residues 27 to 77 (VDRAKEKGIGTPQPDVAKDCWAAELENSSKENEVIEVKSMGESQSKKLQGG) are interaction with EFNB1. Residue T37 is modified to Phosphothreonine. K64 is covalently cross-linked (Glycyl lysine isopeptide (Lys-Gly) (interchain with G-Cter in SUMO2)). 2 C2H2-type zinc fingers span residues 78–101 (YECKYCPYSTQNLNEFTEHVDMQH) and 110–133 (YVCAECNFTTKKYDSLSDHNSKFH). The segment covering 167–180 (TSGPGTGDSDSGIS) has biased composition (low complexity). The interval 167-203 (TSGPGTGDSDSGISVSKTPIMKPGKPKADAKKVPKKP) is disordered. Positions 192-203 (PKADAKKVPKKP) are enriched in basic and acidic residues. Residues 195-358 (DAKKVPKKPE…PAQLAPTKVT (164 aa)) are required for homodimerization. 4 consecutive DNA-binding regions (homeobox) follow at residues 263–324 (NTTK…WSPE), 439–501 (TPAS…IVHI), 530–591 (PQKF…EQAV), and 628–690 (SPSP…TVKW). Positions 263–446 (NTTKYNSALD…PLTPASDRKK (184 aa)) are required for repressor activity. The interval 263-497 (NTTKYNSALD…SDHRYRCQRG (235 aa)) is required for interaction with NFYA. A required for nuclear localization region spans residues 317 to 446 (HGISWSPEEV…PLTPASDRKK (130 aa)). Residues 404–445 (GQKRPLVTPQAAPEPKRPHIAQVPEPPPKVANPPLTPASDRK) are disordered. The span at 427-439 (PEPPPKVANPPLT) shows a compositional bias: pro residues. A Glycyl lysine isopeptide (Lys-Gly) (interchain with G-Cter in SUMO2) cross-link involves residue K455. Residues 754-837 (EPAKDCLPAK…DCVPAEAGQA (84 aa)) form a disordered region. Phosphoserine occurs at positions 825 and 827.

This sequence belongs to the ZHX family. As to quaternary structure, homodimer (via homeobox domain 1). Heterodimer with ZHX1 (via homeobox domain 1). Heterodimer with ZHX3 (via homeobox domain 1). Heterodimerization with ZHX1 is not necessary for repressor activity. Interacts (via homeobox domain) with NFYA (via N-terminus). Interacts with EFNB1 intracellular domain peptide; the interaction enhances ZHX2 transcriptional repression activity.

The protein resides in the nucleus. Acts as a transcriptional repressor. Represses the promoter activity of the CDC25C gene stimulated by NFYA. May play a role in retinal development where it regulates the composition of bipolar cell populations, by promoting differentiation of bipolar OFF-type cells. In the brain, may promote maintenance and suppress differentiation of neural progenitor cells in the developing cortex. The polypeptide is Zinc fingers and homeoboxes protein 2 (ZHX2) (Pongo abelii (Sumatran orangutan)).